Here is a 251-residue protein sequence, read N- to C-terminus: Triosephosphate isomerase (251 aa).

9–11 (NWK) is a binding site for substrate. Residue H96 is the Electrophile of the active site. E168 functions as the Proton acceptor in the catalytic mechanism. Substrate is bound by residues G174, S214, and 235–236 (GG).

Belongs to the triosephosphate isomerase family. In terms of assembly, homodimer.

It is found in the cytoplasm. It catalyses the reaction D-glyceraldehyde 3-phosphate = dihydroxyacetone phosphate. Its pathway is carbohydrate biosynthesis; gluconeogenesis. It functions in the pathway carbohydrate degradation; glycolysis; D-glyceraldehyde 3-phosphate from glycerone phosphate: step 1/1. Functionally, involved in the gluconeogenesis. Catalyzes stereospecifically the conversion of dihydroxyacetone phosphate (DHAP) to D-glyceraldehyde-3-phosphate (G3P). This chain is Triosephosphate isomerase, found in Porphyromonas gingivalis (strain ATCC 33277 / DSM 20709 / CIP 103683 / JCM 12257 / NCTC 11834 / 2561).